The primary structure comprises 408 residues: Phosphopentomutase (408 aa).

Mn(2+) is bound by residues Asp-10, Asp-307, His-312, Asp-348, His-349, and His-360.

This sequence belongs to the phosphopentomutase family. It depends on Mn(2+) as a cofactor.

The protein resides in the cytoplasm. The enzyme catalyses 2-deoxy-alpha-D-ribose 1-phosphate = 2-deoxy-D-ribose 5-phosphate. The catalysed reaction is alpha-D-ribose 1-phosphate = D-ribose 5-phosphate. It functions in the pathway carbohydrate degradation; 2-deoxy-D-ribose 1-phosphate degradation; D-glyceraldehyde 3-phosphate and acetaldehyde from 2-deoxy-alpha-D-ribose 1-phosphate: step 1/2. Its function is as follows. Isomerase that catalyzes the conversion of deoxy-ribose 1-phosphate (dRib-1-P) and ribose 1-phosphate (Rib-1-P) to deoxy-ribose 5-phosphate (dRib-5-P) and ribose 5-phosphate (Rib-5-P), respectively. The polypeptide is Phosphopentomutase (Proteus mirabilis (strain HI4320)).